The primary structure comprises 489 residues: Betaine aldehyde dehydrogenase (489 aa).

K(+) contacts are provided by Thr26 and Asp93. 150 to 152 is a binding site for NAD(+); the sequence is GAW. Residue Lys162 is the Charge relay system of the active site. 176-179 serves as a coordination point for NAD(+); it reads KPSE. Residue Val180 participates in K(+) binding. 229–232 is a binding site for NAD(+); it reads GVET. Leu245 contacts K(+). The active-site Proton acceptor is Glu251. Residues Gly253, Cys285, and Glu386 each coordinate NAD(+). Residue Cys285 is the Nucleophile of the active site. A Cysteine sulfenic acid (-SOH) modification is found at Cys285. K(+) is bound by residues Lys456 and Gly459. The active-site Charge relay system is Glu463.

This sequence belongs to the aldehyde dehydrogenase family. In terms of assembly, dimer of dimers. The cofactor is K(+).

The catalysed reaction is betaine aldehyde + NAD(+) + H2O = glycine betaine + NADH + 2 H(+). The protein operates within amine and polyamine biosynthesis; betaine biosynthesis via choline pathway; betaine from betaine aldehyde: step 1/1. Involved in the biosynthesis of the osmoprotectant glycine betaine. Catalyzes the irreversible oxidation of betaine aldehyde to the corresponding acid. The polypeptide is Betaine aldehyde dehydrogenase (Burkholderia pseudomallei (strain 668)).